The following is a 565-amino-acid chain: Augmin complex subunit dgt3 (565 aa).

2 coiled-coil regions span residues 135-171 (ELQLREKDLIAECQSKAKQLEELQQENCRLSAEAKKA) and 212-241 (QDYDEFQSAEEDLGREKAKLEDLERGIQFY).

Belongs to the HAUS3 family. Component of the augmin complex composed of dgt2, dgt3, dgt4, dgt5, dgt6, msd1, msd5 and wac. The complex interacts directly or indirectly with microtubules and is required for centrosome-independent generation of spindle microtubules.

The protein resides in the cytoplasm. The protein localises to the cytoskeleton. Its subcellular location is the spindle. As part of the augmin complex, plays a role in centrosome-independent generation of spindle microtubules. The complex is required for mitotic spindle assembly through its involvement in localizing gamma-tubulin to spindle microtubules. This is Augmin complex subunit dgt3 from Drosophila melanogaster (Fruit fly).